The primary structure comprises 239 residues: Phosphoribosylaminoimidazole-succinocarboxamide synthase (239 aa).

This sequence belongs to the SAICAR synthetase family.

The enzyme catalyses 5-amino-1-(5-phospho-D-ribosyl)imidazole-4-carboxylate + L-aspartate + ATP = (2S)-2-[5-amino-1-(5-phospho-beta-D-ribosyl)imidazole-4-carboxamido]succinate + ADP + phosphate + 2 H(+). It functions in the pathway purine metabolism; IMP biosynthesis via de novo pathway; 5-amino-1-(5-phospho-D-ribosyl)imidazole-4-carboxamide from 5-amino-1-(5-phospho-D-ribosyl)imidazole-4-carboxylate: step 1/2. This is Phosphoribosylaminoimidazole-succinocarboxamide synthase from Bacillus cereus (strain 03BB102).